We begin with the raw amino-acid sequence, 295 residues long: Dual specificity protein phosphatase 15 (295 aa).

In terms of domain architecture, Tyrosine-protein phosphatase spans 1-141 (MTEGVLPGLY…LEEFGWASSQ (141 aa)). A lipid anchor (N-myristoyl glycine) is attached at Thr-2. Cys-85 (phosphocysteine intermediate) is an active-site residue. The segment covering 251-270 (SSSCTLSASTERPDGSSTPG) has biased composition (polar residues). Residues 251 to 272 (SSSCTLSASTERPDGSSTPGNP) are disordered.

Belongs to the protein-tyrosine phosphatase family. Non-receptor class dual specificity subfamily. In terms of tissue distribution, highly expressed in testis. Expressed in brain; up-regulated in patients with multiple sclerosis gray matter lesions.

It localises to the cytoplasm. The protein localises to the cell membrane. The enzyme catalyses O-phospho-L-tyrosyl-[protein] + H2O = L-tyrosyl-[protein] + phosphate. It carries out the reaction O-phospho-L-seryl-[protein] + H2O = L-seryl-[protein] + phosphate. It catalyses the reaction O-phospho-L-threonyl-[protein] + H2O = L-threonyl-[protein] + phosphate. Functionally, may dephosphorylate MAPK13, ATF2, ERBB3, PDGFRB and SNX6. Its function is as follows. May play a role in the regulation of oligodendrocyte differentiation. May play a role in the regulation of myelin formation. Involved in the regulation of Erk1/2 phosphorylation in Schwann cells; the signaling may be linked to the regulation of myelination. This chain is Dual specificity protein phosphatase 15, found in Homo sapiens (Human).